The sequence spans 1483 residues: Heme-responsive zinc finger transcription factor HAP1 (1483 aa).

The segment covering 1 to 50 (MSNTPYNSSVPSIASMTQSSVSRSPNMHTATTPGANTSSNSPPLHMSSDS) has biased composition (polar residues). Positions 1-56 (MSNTPYNSSVPSIASMTQSSVSRSPNMHTATTPGANTSSNSPPLHMSSDSSKIKRK) are disordered. Residues Cys-64, Cys-67, Cys-74, Cys-81, Cys-84, and Cys-93 each contribute to the Zn(2+) site. Positions 64–93 (CTICRKRKVKCDKLRPHCQQCTKTGVAHLC) form a DNA-binding region, zn(2)-C6 fungal-type. Residues 105-134 (EKELLKDNELKKLRERVKSLEKTLSKVHSS) adopt a coiled-coil conformation. A disordered region spans residues 126 to 208 (KTLSKVHSSP…ANSSSLSISN (83 aa)). Over residues 130-142 (KVHSSPSSNSLKS) the composition is skewed to low complexity. Polar residues-rich tracts occupy residues 143-152 (YNTPESSNLF) and 160-176 (TLVN…SHMH). The segment covering 177-208 (QQQQQQQQQEQQQDFSRSANANANSSSLSISN) has biased composition (low complexity). The interval 244-444 (KGDPYLKLLW…NTIPHHQPQS (201 aa)) is heme-responsive; required for HMC formation. 6 HRM repeats span residues 280-285 (KCPINH), 299-304 (KCPVDH), 323-328 (KCPVDH), 347-352 (RCPVDH), 389-394 (KCPVDH), and 415-420 (RCPIDH). Polar residues-rich tracts occupy residues 432 to 447 (STHN…SGSH) and 706 to 734 (QLNA…NPTL). Disordered stretches follow at residues 432 to 458 (STHN…NRKH) and 706 to 767 (QLNA…KENQ). The segment covering 735–759 (NNNMSAATTNSSSRSGSADSRSGSN) has biased composition (low complexity). The stretch at 1192–1197 (KCPVYQ) is one HRM 7 repeat.

In terms of assembly, binds DNA as a homodimer. Interacts with SRO9 and YDJ1. In the absence of heme, binds to at least four cellular proteins, including YDJ1 and SRO9, forming a high-molecular-weight complex (HMC) which results in repression of its activity and dictates its DNA-binding specificity.

It localises to the nucleus. Functionally, regulation of oxygen dependent gene expression. It modulates the expression of Iso-1 (CYP1) and Iso-2 (CYP3) cytochrome c. In response to heme, promotes transcription of genes encoding functions required for respiration, controlling oxidative damage and repression of anaerobic genes. Binds to the sequence 5'-CGGNNNTNNCGG-3'. The polypeptide is Heme-responsive zinc finger transcription factor HAP1 (HAP1) (Saccharomyces cerevisiae (strain Lalvin EC1118 / Prise de mousse) (Baker's yeast)).